The sequence spans 185 residues: Photosystem I assembly protein Ycf4 (185 aa).

2 consecutive transmembrane segments (helical) span residues 20–40 (GNFFWACILFLGSLGFLSVGA) and 57–77 (ILFFPQGVVMSFYGIAGLFIS).

Belongs to the Ycf4 family.

The protein resides in the plastid. It is found in the chloroplast thylakoid membrane. Seems to be required for the assembly of the photosystem I complex. This is Photosystem I assembly protein Ycf4 from Agrostis stolonifera (Creeping bentgrass).